The following is a 199-amino-acid chain: 3-isopropylmalate dehydratase small subunit (199 aa).

Belongs to the LeuD family. LeuD type 1 subfamily. As to quaternary structure, heterodimer of LeuC and LeuD.

The catalysed reaction is (2R,3S)-3-isopropylmalate = (2S)-2-isopropylmalate. It functions in the pathway amino-acid biosynthesis; L-leucine biosynthesis; L-leucine from 3-methyl-2-oxobutanoate: step 2/4. Catalyzes the isomerization between 2-isopropylmalate and 3-isopropylmalate, via the formation of 2-isopropylmaleate. The sequence is that of 3-isopropylmalate dehydratase small subunit from Bacillus velezensis (strain DSM 23117 / BGSC 10A6 / LMG 26770 / FZB42) (Bacillus amyloliquefaciens subsp. plantarum).